A 497-amino-acid polypeptide reads, in one-letter code: Guanosine-5'-triphosphate,3'-diphosphate pyrophosphatase (497 aa).

It belongs to the GppA/Ppx family. GppA subfamily.

The catalysed reaction is guanosine 3'-diphosphate 5'-triphosphate + H2O = guanosine 3',5'-bis(diphosphate) + phosphate + H(+). Its pathway is purine metabolism; ppGpp biosynthesis; ppGpp from GTP: step 2/2. Its function is as follows. Catalyzes the conversion of pppGpp to ppGpp. Guanosine pentaphosphate (pppGpp) is a cytoplasmic signaling molecule which together with ppGpp controls the 'stringent response', an adaptive process that allows bacteria to respond to amino acid starvation, resulting in the coordinated regulation of numerous cellular activities. In Aliivibrio fischeri (strain ATCC 700601 / ES114) (Vibrio fischeri), this protein is Guanosine-5'-triphosphate,3'-diphosphate pyrophosphatase.